The following is a 111-amino-acid chain: Small ribosomal subunit protein bS6 (111 aa).

This sequence belongs to the bacterial ribosomal protein bS6 family.

Functionally, binds together with bS18 to 16S ribosomal RNA. The chain is Small ribosomal subunit protein bS6 from Francisella philomiragia subsp. philomiragia (strain ATCC 25017 / CCUG 19701 / FSC 153 / O#319-036).